We begin with the raw amino-acid sequence, 702 residues long: MNSLFASTARGLEELLKTELENLGAVECQVVQGGVHFKGDTRLVYQSLMWSRLASRIMLPLGECKVYSDLDLYLGVQAINWTEMFNPGATFAVHFSGLNDTIRNSQYGAMKVKDAIVDAFTRKNLPRPNVDRDAPDIRVNVWLHKETASIALDLSGDGLHLRGYRDRAGIAPIKETLAAAIVMRSGWQPGTPLLDPMCGSGTLLIEAAMLATDRAPGLHRGRWGFSGWAQHDEAIWQEVKAEAQTRARKGLAEYSSHFYGSDSDARVIQRARTNARLAGIGELITFEVKDVAQLTNPLPKGPYGTVLSNPPYGERLDSEPALIALHSLLGRIMKNQFGGWNLSLFSASPDLLSCLQLRADKQYKAKNGPLDCVQKNYHVAESTPDSKPAMVAEDYTNRLRKNLKKFEKWARQEGIECYRLYDADLPEYNVAVDRYADWVVVQEYAPPKTIDAHKARQRLFDIIAATISVLGIAPNKLVLKTRERQKGKNQYQKLGEKGEFLEVTEYNAHLWVNLTDYLDTGLFLDHRIARRMLGQMSKGKDFLNLFSYTGSATVHAGLGGARSTTTVDMSRTYLEWAERNLRLNGLTGRAHRLIQADCLAWLREANEQFDLIFIDPPTFSNSKRMEDAFDVQRDHLALMKDLKRLLRAGGTIMFSNNKRGFRMDLDGLAKLGLKAQEITQKTLSQDFARNRQIHNCWLITAA.

The region spanning leucine 43–leucine 154 is the THUMP domain.

It belongs to the methyltransferase superfamily. RlmKL family.

It localises to the cytoplasm. The catalysed reaction is guanosine(2445) in 23S rRNA + S-adenosyl-L-methionine = N(2)-methylguanosine(2445) in 23S rRNA + S-adenosyl-L-homocysteine + H(+). It carries out the reaction guanosine(2069) in 23S rRNA + S-adenosyl-L-methionine = N(2)-methylguanosine(2069) in 23S rRNA + S-adenosyl-L-homocysteine + H(+). Specifically methylates the guanine in position 2445 (m2G2445) and the guanine in position 2069 (m7G2069) of 23S rRNA. The protein is Ribosomal RNA large subunit methyltransferase K/L of Escherichia coli (strain K12 / DH10B).